A 179-amino-acid chain; its full sequence is Replication restart protein DnaT (179 aa).

The segment at 156–179 (GGLPKRDVNTVSEPDSQIPPGFRG) is disordered.

It belongs to the DnaT family. Homooligomerizes. Interacts with PriB. Component of the replication restart primosome. Primosome assembly occurs via a 'hand-off' mechanism. PriA binds to replication forks, subsequently PriB then DnaT bind; DnaT then displaces ssDNA to generate the helicase loading substrate.

In terms of biological role, involved in the restart of stalled replication forks, which reloads the replicative helicase on sites other than the origin of replication. Can function in multiple replication restart pathways. Displaces ssDNA from a PriB-ssDNA complex. Probably forms a spiral filament on ssDNA. In Escherichia coli (strain ATCC 8739 / DSM 1576 / NBRC 3972 / NCIMB 8545 / WDCM 00012 / Crooks), this protein is Replication restart protein DnaT.